A 213-amino-acid polypeptide reads, in one-letter code: G2/mitotic-specific cyclin-1 (213 aa).

A disordered region spans residues 1 to 23 (MKFSEEKNVSNNPTNFEGGLDSR).

This sequence belongs to the cyclin family. Cyclin AB subfamily. As to quaternary structure, interacts with the CDC2 protein kinase to form a serine/threonine kinase holoenzyme complex also known as maturation promoting factor (MPF). The cyclin subunit imparts substrate specificity to the complex. As to expression, only expressed in organs with dividing cells.

Functionally, essential for the control of the cell cycle at the G2/M (mitosis) transition. This chain is G2/mitotic-specific cyclin-1, found in Medicago sativa (Alfalfa).